The primary structure comprises 109 residues: NADH-quinone oxidoreductase subunit K (109 aa).

Helical transmembrane passes span 12–32 (LNHY…GLFM), 40–60 (ILMS…AFSV), and 72–92 (IIIL…LLIY).

It belongs to the complex I subunit 4L family. In terms of assembly, NDH-1 is composed of 14 different subunits. Subunits NuoA, H, J, K, L, M, N constitute the membrane sector of the complex.

The protein resides in the cell inner membrane. The enzyme catalyses a quinone + NADH + 5 H(+)(in) = a quinol + NAD(+) + 4 H(+)(out). NDH-1 shuttles electrons from NADH, via FMN and iron-sulfur (Fe-S) centers, to quinones in the respiratory chain. The immediate electron acceptor for the enzyme in this species is believed to be ubiquinone. Couples the redox reaction to proton translocation (for every two electrons transferred, four hydrogen ions are translocated across the cytoplasmic membrane), and thus conserves the redox energy in a proton gradient. The protein is NADH-quinone oxidoreductase subunit K of Rickettsia bellii (strain RML369-C).